The sequence spans 357 residues: Sorbitol dehydrogenase (357 aa).

A2 is modified (N-acetylalanine). A Zn(2+)-binding site is contributed by C45. Y51 lines the substrate pocket. Zn(2+)-binding residues include H70 and E71. Residue E156 participates in substrate binding. I184, D204, and R209 together coordinate NAD(+). A phosphoserine mark is found at S211 and S225. Residues 273–275 (VGL) and 297–299 (VFR) contribute to the NAD(+) site. Residues R299 and Y300 each coordinate substrate.

The protein belongs to the zinc-containing alcohol dehydrogenase family. As to quaternary structure, homotetramer. Zn(2+) serves as cofactor.

The protein localises to the mitochondrion membrane. The protein resides in the cell projection. Its subcellular location is the cilium. It localises to the flagellum. It carries out the reaction xylitol + NAD(+) = D-xylulose + NADH + H(+). It catalyses the reaction L-iditol + NAD(+) = keto-L-sorbose + NADH + H(+). The enzyme catalyses keto-D-fructose + NADH + H(+) = D-sorbitol + NAD(+). In terms of biological role, polyol dehydrogenase that catalyzes the reversible NAD(+)-dependent oxidation of various sugar alcohols. Is active with xylitol, L-iditol and D-sorbitol (D-glucitol) as substrates, leading to the C2-oxidized products D-xylulose, L-sorbose and D-fructose, respectively. Is a key enzyme in the polyol pathway that interconverts glucose and fructose via sorbitol, which constitutes an important alternate route for glucose metabolism. May play a role in sperm motility by using sorbitol as an alternative energy source for sperm motility. This is Sorbitol dehydrogenase (SORD) from Macaca fascicularis (Crab-eating macaque).